The chain runs to 120 residues: Putative ferric transport system permease-like protein AfuB (120 aa).

At 1-38 (MESLPGQIDKSLDEASLSLRAGSLRTITHILLPLLRPA) the chain is on the cytoplasmic side. The ABC transmembrane type-1 domain occupies 1 to 102 (MESLPGQIDK…VVMLAIIFIF (102 aa)). A helical transmembrane segment spans residues 39 to 59 (ILSALIYSFVRAITTVSAIVF). The Periplasmic portion of the chain corresponds to 60–81 (LVTPDTRVATAYILNRVEDGEY). Residues 82–102 (GVAIAYGSILIVVMLAIIFIF) traverse the membrane as a helical segment. Over 103–120 (DWLIGESRTSRSKAKNQA) the chain is Cytoplasmic.

The protein belongs to the binding-protein-dependent transport system permease family. FbpB subfamily.

The protein resides in the cell inner membrane. A severely truncated paralog of the AfuB uptake protein, homologous only to the last 20% of the intact protein in Actinobacillus. The polypeptide is Putative ferric transport system permease-like protein AfuB (afuB) (Escherichia coli (strain K12)).